The chain runs to 230 residues: Ion-translocating oxidoreductase complex subunit E (230 aa).

A run of 6 helical transmembrane segments spans residues Ala18 to Ala38, Leu39 to Leu59, Thr63 to Val83, Leu86 to Val106, Trp125 to Leu145, and Pro182 to Val202.

Belongs to the NqrDE/RnfAE family. In terms of assembly, the complex is composed of six subunits: RsxA, RsxB, RsxC, RsxD, RsxE and RsxG.

It localises to the cell inner membrane. In terms of biological role, part of a membrane-bound complex that couples electron transfer with translocation of ions across the membrane. Required to maintain the reduced state of SoxR. The sequence is that of Ion-translocating oxidoreductase complex subunit E from Salmonella agona (strain SL483).